Reading from the N-terminus, the 352-residue chain is Large ribosomal subunit protein uL5m (352 aa).

Positions 28–109 are disordered; sequence STQTGAGAAA…HPIQSPPSSD (82 aa). The segment covering 63–80 has biased composition (basic and acidic residues); sequence EEDKKEFRPWKRAADRKA.

The protein belongs to the universal ribosomal protein uL5 family. As to quaternary structure, component of the mitochondrial large ribosomal subunit (mt-LSU). Mature N.crassa 74S mitochondrial ribosomes consist of a small (37S) and a large (54S) subunit. The 37S small subunit contains a 16S ribosomal RNA (16S mt-rRNA) and 32 different proteins. The 54S large subunit contains a 23S rRNA (23S mt-rRNA) and 42 different proteins. Unlike bacterial L5, uL5m does not bind zinc.

It is found in the mitochondrion. Functionally, component of the mitochondrial ribosome (mitoribosome), a dedicated translation machinery responsible for the synthesis of mitochondrial genome-encoded proteins, including at least some of the essential transmembrane subunits of the mitochondrial respiratory chain. The mitoribosomes are attached to the mitochondrial inner membrane and translation products are cotranslationally integrated into the membrane. The polypeptide is Large ribosomal subunit protein uL5m (mrpl7) (Neurospora crassa (strain ATCC 24698 / 74-OR23-1A / CBS 708.71 / DSM 1257 / FGSC 987)).